The chain runs to 240 residues: Sugar fermentation stimulation protein homolog (240 aa).

Belongs to the SfsA family.

The protein is Sugar fermentation stimulation protein homolog of Saccharolobus islandicus (strain L.S.2.15 / Lassen #1) (Sulfolobus islandicus).